Consider the following 201-residue polypeptide: Imidazole glycerol phosphate synthase subunit HisH 1 (201 aa).

The 201-residue stretch at 1–201 (MIALIDYKAG…LKLLENFIRL (201 aa)) folds into the Glutamine amidotransferase type-1 domain. The Nucleophile role is filled by Cys-80. Active-site residues include His-183 and Glu-185.

In terms of assembly, heterodimer of HisH and HisF.

The protein localises to the cytoplasm. The enzyme catalyses 5-[(5-phospho-1-deoxy-D-ribulos-1-ylimino)methylamino]-1-(5-phospho-beta-D-ribosyl)imidazole-4-carboxamide + L-glutamine = D-erythro-1-(imidazol-4-yl)glycerol 3-phosphate + 5-amino-1-(5-phospho-beta-D-ribosyl)imidazole-4-carboxamide + L-glutamate + H(+). It carries out the reaction L-glutamine + H2O = L-glutamate + NH4(+). The protein operates within amino-acid biosynthesis; L-histidine biosynthesis; L-histidine from 5-phospho-alpha-D-ribose 1-diphosphate: step 5/9. Its function is as follows. IGPS catalyzes the conversion of PRFAR and glutamine to IGP, AICAR and glutamate. The HisH subunit provides the glutamine amidotransferase activity that produces the ammonia necessary to HisF for the synthesis of IGP and AICAR. This Campylobacter jejuni (strain RM1221) protein is Imidazole glycerol phosphate synthase subunit HisH 1.